A 536-amino-acid polypeptide reads, in one-letter code: Phosphoenolpyruvate carboxykinase (ATP) (536 aa).

Substrate contacts are provided by arginine 61, tyrosine 195, and lysine 201. ATP is bound by residues lysine 201, histidine 220, and 236–244; that span reads GLSGTGKTT. Residues lysine 201 and histidine 220 each contribute to the Mn(2+) site. Aspartate 257 lines the Mn(2+) pocket. 3 residues coordinate ATP: glutamate 285, arginine 322, and threonine 447. Residue arginine 322 coordinates substrate.

It belongs to the phosphoenolpyruvate carboxykinase (ATP) family. The cofactor is Mn(2+).

Its subcellular location is the cytoplasm. The enzyme catalyses oxaloacetate + ATP = phosphoenolpyruvate + ADP + CO2. It functions in the pathway carbohydrate biosynthesis; gluconeogenesis. In terms of biological role, involved in the gluconeogenesis. Catalyzes the conversion of oxaloacetate (OAA) to phosphoenolpyruvate (PEP) through direct phosphoryl transfer between the nucleoside triphosphate and OAA. This is Phosphoenolpyruvate carboxykinase (ATP) from Rhizobium meliloti (strain 1021) (Ensifer meliloti).